Consider the following 21-residue polypeptide: S-layer protein 2 (21 aa).

Its subcellular location is the secreted. The protein resides in the cell wall. The protein localises to the S-layer. Its function is as follows. The S-layer is a paracrystalline mono-layered assembly of proteins which coat the surface of bacteria. The chain is S-layer protein 2 from Bacillus thuringiensis subsp. konkukian.